The following is a 416-amino-acid chain: MMQAHDVLTLTEPPLDLDLIDLDEDFDDEDIELELEETSDSNDGKKTRRLASARRRDAARKKPYTEDSIRIYLQEIGRIRLLRAEEEIELARKIADLLKLERIREDFCLYSDAEWGKQVFLFERIEKIIVEKSEKEPKLSDIKAYLGKTELTAPLLEEWLAKSKEYLSAFKRRLYHGRRAKEKMVQSNLRLVVSIAKKYMNRGLSFQDLIQEGSLGLIRAAEKFDHEKGYKFSTYATWWIRQAITRAIADQSRTIRLPVHLYETISRIKKTTKILSQEMRRKPTEEEIATKMEMTIEKLRFIAKSAQLPISLETPIGKEEDSRLGDFIEADGETPEDEVSKNLLREDLENVLDTLSPRERDVLRLRYGLDDGRMKTLEEIGQIFNVTRERIRQIEAKALRKLRHPNRNSILKEYIR.

Positions 184 to 254 (MVQSNLRLVV…TRAIADQSRT (71 aa)) are sigma-70 factor domain-2. The Interaction with polymerase core subunit RpoC motif lies at 208–211 (DLIQ). Residues 263 to 338 (ETISRIKKTT…EADGETPEDE (76 aa)) are sigma-70 factor domain-3. The segment at 351 to 404 (VLDTLSPRERDVLRLRYGLDDGRMKTLEEIGQIFNVTRERIRQIEAKALRKLRH) is sigma-70 factor domain-4. Positions 377–396 (LEEIGQIFNVTRERIRQIEA) form a DNA-binding region, H-T-H motif.

It belongs to the sigma-70 factor family. RpoD/SigA subfamily. In terms of assembly, interacts transiently with the RNA polymerase catalytic core.

Its subcellular location is the cytoplasm. In terms of biological role, sigma factors are initiation factors that promote the attachment of RNA polymerase to specific initiation sites and are then released. This sigma factor is the primary sigma factor during exponential growth. The chain is RNA polymerase sigma factor SigA from Microcystis aeruginosa.